A 932-amino-acid polypeptide reads, in one-letter code: Potassium voltage-gated channel subfamily KQT member 5 (932 aa).

Residues 1 to 125 lie on the Cytoplasmic side of the membrane; it reads MPRHHAGGEE…YNVLERPRGW (125 aa). S88 is modified (phosphoserine). Residues 126–146 traverse the membrane as a helical segment; the sequence is AFIYHAFVFLLVFGCLILSVF. Residues 147-156 are Extracellular-facing; the sequence is STIPEHTKLA. A helical transmembrane segment spans residues 157–177; that stretch reads SSCLLILEFVMIVVFGLEFII. Topologically, residues 178-200 are cytoplasmic; sequence RIWSAGCCCRYRGWQGRLRFARK. The chain crosses the membrane as a helical span at residues 201-221; sequence PFCVIDTIVLIASIAVVSAKT. Over 222-229 the chain is Extracellular; that stretch reads QGNIFATS. A helical; Voltage-sensor transmembrane segment spans residues 230-252; the sequence is ALRSLRFLQILRMVRMDRRGGTW. Residues R248 and K264 each coordinate a 1,2-diacyl-sn-glycero-3-phospho-(1D-myo-inositol-4,5-bisphosphate). Over 253–266 the chain is Cytoplasmic; it reads KLLGSVVYAHSKEL. The helical transmembrane segment at 267–287 threads the bilayer; that stretch reads ITAWYIGFLVLIFSSFLVYLV. At 288–298 the chain is on the extracellular side; the sequence is EKDANKEFSTY. The segment at residues 299–319 is an intramembrane region (pore-forming); sequence ADALWWGTITLTTIGYGDKTP. Residues 320–325 are Extracellular-facing; that stretch reads LTWLGR. A helical transmembrane segment spans residues 326 to 346; that stretch reads LLSAGFALLGISFFALPAGIL. Residues 347–932 lie on the Cytoplasmic side of the membrane; that stretch reads GSGFALKVQE…ALSLPHVKLK (586 aa). Position 361 (K361) interacts with a 1,2-diacyl-sn-glycero-3-phospho-(1D-myo-inositol-4,5-bisphosphate). Residues 370–378 form an interaction with CALM region; it reads AANLIQCVW. The disordered stretch occupies residues 404-465; the sequence is SPTKKEQGEA…GSPTKVQKSW (62 aa). Residues 431 to 440 show a composition bias toward polar residues; that stretch reads RGQSIKSRQA. Residue S447 is modified to Phosphoserine. The tract at residues 521 to 528 is interaction with CALM; it reads VIRAIRIM. A disordered region spans residues 655 to 678; sequence SDYQSPVDSKDLSGSAQNSGCLSR. S831 carries the phosphoserine modification. The span at 876–885 shows a compositional bias: acidic residues; that stretch reads VGPEETETDT. The segment at 876 to 919 is disordered; sequence VGPEETETDTFDAAPQPAREAAFASDSLRTGRSRSSQSICKAGE. A compositionally biased stretch (low complexity) spans 888–899; it reads AAPQPAREAAFA. Over residues 902 to 914 the composition is skewed to polar residues; sequence SLRTGRSRSSQSI.

This sequence belongs to the potassium channel family. KQT (TC 1.A.1.15) subfamily. Kv7.5/KCNQ5 sub-subfamily. Homotetramer; forms a functional homotetrameric channel resulting in the expression of a small M-current. Heterotetramer with KCNQ3; forms heterotetrameric M-channel responsible for the native M-current. Heterotetramer with KCNQ1; forms a functional voltage-gated potassium channel. Interacts (via C-terminus) with calmodulin/CALM1; forms a heterooctameric structure (with 4:4 KCNQ1:CALM stoichiometry); the interaction is calcium-independent, constitutive and participates in the channel function. In terms of tissue distribution, strongly expressed in brain and skeletal muscle. In brain, expressed in cerebral cortex, occipital pole, frontal lobe and temporal lobe. Lower levels in hippocampus and putamen. Low to undetectable levels in medulla, cerebellum and thalamus.

The protein localises to the cell membrane. It carries out the reaction K(+)(in) = K(+)(out). Phosphatidylinositol-4,5-bisphosphate (PIP2) is essential to activate KCNQ5 channel by inducing the coupling of the voltage-sensing domain (VSD) and the pore-forming domain (PD). Calcium suppresses KCNQ5 channel current through calcium-bound CALM C-terminus. Therefore CALM acts as calcium sensor that controls channel activity. Activated by niflumic acid and the anticonvulsant retigabine. Inhibited by barium, linopirdine, XE991 and tetraethylammonium (as homomer). Insensitive to tetraethylammonium in KCNQ3-KCNQ5 heteromers. Its function is as follows. Pore-forming subunit of the voltage-gated potassium (Kv) channel broadly expressed in brain and involved in the regulation of neuronal excitability. Associates with KCNQ3/Kv7.3 pore-forming subunit to form a potassium channel which contributes to M-type current, a slowly activating and deactivating potassium conductance which plays a critical role in determining the subthreshold electrical excitability of neurons. Contributes, with other potassium channels, to the molecular diversity of a heterogeneous population of M-channels, varying in kinetic and pharmacological properties, which underlie this physiologically important current. Also forms a functional channel with KCNQ1/Kv7.1 subunit that may contribute to vasoconstriction and hypertension. Channel may be selectively permeable in vitro to other cations besides potassium, in decreasing order of affinity K(+) = Rb(+) &gt; Cs(+) &gt; Na(+). Similar to the native M-channel, KCNQ3-KCNQ5 potassium channel is suppressed by activation of the muscarinic acetylcholine receptor CHRM1. The protein is Potassium voltage-gated channel subfamily KQT member 5 of Homo sapiens (Human).